The sequence spans 788 residues: Choline transporter-like protein 1 (788 aa).

A helical membrane pass occupies residues 98-118 (FLFFVFLCGWVVVASLGIMWG). N-linked (GlcNAc...) asparagine glycosylation is present at Asn276. Transmembrane regions (helical) follow at residues 329-349 (WWQTLILIFAAGMLSFIWTVI), 352-372 (LLGSLLIWLSIFLVLGALGFG), 409-429 (FVVAIATSVLLVIFLLVILFI), and 458-478 (LFPFLLHIGVFALWGSIAIWL). Asn497 is a glycosylation site (N-linked (GlcNAc...) asparagine). 5 helical membrane-spanning segments follow: residues 531–551 (LFAFFWLSCFVTALGDIALAG), 583–603 (LGSIAFGSLIIAIVKIIRVML), 620–640 (WFLMCLKCCFWCLEMFFKFLT), 679–699 (AGILLFLGKAMITLGMGILSF), and 718–738 (YYFVPIVIVVIGSYFMADLFF).

This sequence belongs to the CTL (choline transporter-like) family.

Its subcellular location is the membrane. The protein is Choline transporter-like protein 1 (chtl-1) of Caenorhabditis briggsae.